The sequence spans 456 residues: Bifunctional protein GlmU (456 aa).

Residues M1–R229 are pyrophosphorylase. Residues L11–G14, K25, Q76, G81–T82, Y103–D105, G140, E154, N169, and N227 contribute to the UDP-N-acetyl-alpha-D-glucosamine site. Mg(2+) is bound at residue D105. N227 contributes to the Mg(2+) binding site. The linker stretch occupies residues L230–A250. The tract at residues G251–K456 is N-acetyltransferase. UDP-N-acetyl-alpha-D-glucosamine contacts are provided by R333 and K351. The active-site Proton acceptor is H363. Residues Y366 and N377 each contribute to the UDP-N-acetyl-alpha-D-glucosamine site. Residues A380, N386 to Y387, S405, A423, and R440 each bind acetyl-CoA.

The protein in the N-terminal section; belongs to the N-acetylglucosamine-1-phosphate uridyltransferase family. This sequence in the C-terminal section; belongs to the transferase hexapeptide repeat family. In terms of assembly, homotrimer. Mg(2+) is required as a cofactor.

The protein resides in the cytoplasm. The enzyme catalyses alpha-D-glucosamine 1-phosphate + acetyl-CoA = N-acetyl-alpha-D-glucosamine 1-phosphate + CoA + H(+). It carries out the reaction N-acetyl-alpha-D-glucosamine 1-phosphate + UTP + H(+) = UDP-N-acetyl-alpha-D-glucosamine + diphosphate. It participates in nucleotide-sugar biosynthesis; UDP-N-acetyl-alpha-D-glucosamine biosynthesis; N-acetyl-alpha-D-glucosamine 1-phosphate from alpha-D-glucosamine 6-phosphate (route II): step 2/2. Its pathway is nucleotide-sugar biosynthesis; UDP-N-acetyl-alpha-D-glucosamine biosynthesis; UDP-N-acetyl-alpha-D-glucosamine from N-acetyl-alpha-D-glucosamine 1-phosphate: step 1/1. The protein operates within bacterial outer membrane biogenesis; LPS lipid A biosynthesis. Functionally, catalyzes the last two sequential reactions in the de novo biosynthetic pathway for UDP-N-acetylglucosamine (UDP-GlcNAc). The C-terminal domain catalyzes the transfer of acetyl group from acetyl coenzyme A to glucosamine-1-phosphate (GlcN-1-P) to produce N-acetylglucosamine-1-phosphate (GlcNAc-1-P), which is converted into UDP-GlcNAc by the transfer of uridine 5-monophosphate (from uridine 5-triphosphate), a reaction catalyzed by the N-terminal domain. The chain is Bifunctional protein GlmU from Escherichia coli O7:K1 (strain IAI39 / ExPEC).